The chain runs to 816 residues: MTVKVKFPKDIREYARKEKVKDSLIKLTETALAEAISKFHRRMIVLQGDTLNKAKLAGILAGGAARILSEYIPEMLERKLRDTEQIEVLYATDALGEDTYGRKRFEEFRKHFSLLAPTAELTSVTFKHSRDILGRTFDILVIDLSYDYSPNDLGRIIETVRGGGLIFVLTNPFEKWKDMWTGFHKSLVTPPYTIEDVKKRFNRRLIRKFTEHKGIYIVNTDRMSIERKPGKYRSQATLPEREKVEIPKNIRFPRELYELCLTRGQVEVLKTLEELIEKEGMVVLTADRGRGKSVSIGIASVGLAVSSKKKRFRIVVTAPEPENVQSLMKFAKKSLEVLGYKTKVITDNGLIKEVYAKGIGIRYYPPTKGYRQRAELYIVDEAAGIHVPILHRYLEKERVVFSSTIHGYEGAGRGFSVKFLKKAKEKREYKEVHLSTPIRYAEGDPIEKWLFDVLLLDAEPVELTEEDYELIRKMEVYLEEPDLDDWFENDREDLRHFVGIYVLAHYRNRPSDVALLADAPHHEARVLRLKNGKIVTAIQIAKEGGIPKAVIDKMAKGYKPPGNIIPDMMVKHHYAKEFARLKGYRVVRIATHPDAMDMGLGSKALELLIKEAEEKGLDWVGSGFGASPELIRFWVRNGFAVVHLSPTRNPVSGEYTAIVIKPISEKAKEIVKKANEEFRIRLTEWLGDTHRDLEPEIARWLFESPFGEAVNYPIYLTKTQKRRLEMFIKRILTYDTVVDAVKPLVKLYFLDGWMRPYLDERQIMLLIHRVLQAHDWKETAKLLNRTEMYTMVELRDIVRGLWYYYKHLIKDEEGEK.

ATP is bound by residues Q265 and R439. Positions 469–664 (ELIRKMEVYL…YTAIVIKPIS (196 aa)) constitute an N-acetyltransferase domain. Acetyl-CoA contacts are provided by residues 589-591 (IAT), E629, and R636.

The protein belongs to the TmcA family.

The protein localises to the cytoplasm. The catalysed reaction is cytidine(34) in elongator tRNA(Met) + acetyl-CoA + ATP + H2O = N(4)-acetylcytidine(34) in elongator tRNA(Met) + ADP + phosphate + CoA + H(+). It carries out the reaction a cytidine in RNA + acetyl-CoA + ATP + H2O = an N(4)-acetylcytidine in RNA + ADP + phosphate + CoA + H(+). The enzyme catalyses a cytidine in tRNA + acetyl-CoA + ATP + H2O = an N(4)-acetylcytidine in tRNA + ADP + phosphate + CoA + H(+). It catalyses the reaction a cytidine in mRNA + acetyl-CoA + ATP + H2O = an N(4)-acetylcytidine in mRNA + ADP + phosphate + CoA + H(+). Functionally, catalyzes the formation of N(4)-acetylcytidine (ac(4)C) at the wobble position of tRNA(Met), by using acetyl-CoA as an acetyl donor and ATP (or GTP). Catalyzes the formation of 233 N(4)-acetylcytidine (ac(4)C) sites in RNA, on the middle C of a CCG motif. Modifications are found in rRNA, ncRNA, mRNA and tRNA. More acetylation is observed at 85 than at 65 or 75 degrees Celsius. This chain is tRNA(Met) cytidine acetyltransferase TmcA, found in Pyrococcus furiosus (strain ATCC 43587 / DSM 3638 / JCM 8422 / Vc1).